The following is a 663-amino-acid chain: 72 kDa type IV collagenase (663 aa).

The signal sequence occupies residues methionine 1–alanine 26. A propeptide spans alanine 27–asparagine 106 (activation peptide). Positions proline 97–valine 104 match the Cysteine switch motif. Cysteine 99 serves as a coordination point for Zn(2+). The collagenase-like 1 stretch occupies residues tyrosine 107–valine 218. Aspartate 131 and aspartate 165 together coordinate Ca(2+). The Zn(2+) site is built by histidine 175 and aspartate 177. Ca(2+)-binding residues include aspartate 182 and glycine 183. Histidine 190 lines the Zn(2+) pocket. Glycine 197, glycine 199, and aspartate 201 together coordinate Ca(2+). Histidine 203 serves as a coordination point for Zn(2+). Aspartate 205, aspartate 206, and glutamate 208 together coordinate Ca(2+). Residues arginine 219 to serine 393 form a collagen-binding region. 3 consecutive Fibronectin type-II domains span residues alanine 225–histidine 273, glycine 283–glutamate 331, and serine 341–aspartate 389. 6 disulfide bridges follow: cysteine 230–cysteine 256, cysteine 244–cysteine 271, cysteine 288–cysteine 314, cysteine 302–cysteine 329, cysteine 346–cysteine 372, and cysteine 360–cysteine 387. Positions leucine 394–threonine 468 are collagenase-like 2. Histidine 400 contributes to the Zn(2+) binding site. Glutamate 401 is an active-site residue. The Zn(2+) site is built by histidine 404 and histidine 410. The interval serine 445–leucine 464 is disordered. The segment covering glutamate 449–threonine 463 has biased composition (pro residues). A disulfide bridge links cysteine 472 with cysteine 663. Hemopexin repeat units lie at residues aspartate 475 to leucine 519, proline 520 to proline 566, valine 568 to valine 616, and proline 617 to cysteine 663. Residues aspartate 479, aspartate 524, aspartate 572, and aspartate 621 each coordinate Ca(2+).

It belongs to the peptidase M10A family. In terms of assembly, ligand for integrin alpha-V/beta-3. It depends on Ca(2+) as a cofactor. Zn(2+) is required as a cofactor. The propeptide is processed by MMP14 (MT-MMP1) and MMP16 (MT-MMP3). In terms of tissue distribution, produced by normal skin fibroblasts.

The protein localises to the secreted. Its subcellular location is the extracellular space. It is found in the extracellular matrix. It catalyses the reaction Cleavage of gelatin type I and collagen types IV, V, VII, X. Cleaves the collagen-like sequence Pro-Gln-Gly-|-Ile-Ala-Gly-Gln.. The protein is 72 kDa type IV collagenase (MMP2) of Gallus gallus (Chicken).